The following is a 545-amino-acid chain: CTP synthase (545 aa).

An amidoligase domain region spans residues Met1–Leu266. CTP is bound at residue Ser14. Ser14 serves as a coordination point for UTP. ATP contacts are provided by residues Ser15 to Ile20 and Asp72. The Mg(2+) site is built by Asp72 and Glu140. CTP is bound by residues Asp147–Glu149, Lys187–Gln192, and Lys223. UTP is bound by residues Lys187–Gln192 and Lys223. Lys239–Val241 contacts ATP. The region spanning Thr291 to Lys542 is the Glutamine amidotransferase type-1 domain. Gly352 is a binding site for L-glutamine. The active-site Nucleophile; for glutamine hydrolysis is the Cys379. L-glutamine is bound by residues Leu380–Gln383, Glu403, and Arg470. Catalysis depends on residues His515 and Glu517.

It belongs to the CTP synthase family. In terms of assembly, homotetramer.

The catalysed reaction is UTP + L-glutamine + ATP + H2O = CTP + L-glutamate + ADP + phosphate + 2 H(+). It carries out the reaction L-glutamine + H2O = L-glutamate + NH4(+). It catalyses the reaction UTP + NH4(+) + ATP = CTP + ADP + phosphate + 2 H(+). It participates in pyrimidine metabolism; CTP biosynthesis via de novo pathway; CTP from UDP: step 2/2. Allosterically activated by GTP, when glutamine is the substrate; GTP has no effect on the reaction when ammonia is the substrate. The allosteric effector GTP functions by stabilizing the protein conformation that binds the tetrahedral intermediate(s) formed during glutamine hydrolysis. Inhibited by the product CTP, via allosteric rather than competitive inhibition. Functionally, catalyzes the ATP-dependent amination of UTP to CTP with either L-glutamine or ammonia as the source of nitrogen. Regulates intracellular CTP levels through interactions with the four ribonucleotide triphosphates. The polypeptide is CTP synthase (Haemophilus influenzae (strain PittEE)).